The following is a 373-amino-acid chain: 3 beta-hydroxysteroid dehydrogenase/Delta 5--&gt;4-isomerase type 1 (373 aa).

NADP(+)-binding positions include 10-15 (GAGGFL), Tyr-155, and Lys-159. The Proton donor role is filled by Lys-159. A helical transmembrane segment spans residues 288–308 (LSLMYWIGFLLEIVSFLLRPI).

It belongs to the 3-beta-HSD family. In terms of tissue distribution, placenta and skin. Predominantly expressed in mammary gland tissue.

It is found in the endoplasmic reticulum membrane. It localises to the mitochondrion membrane. The enzyme catalyses a 3beta-hydroxy-Delta(5)-steroid + NAD(+) = a 3-oxo-Delta(5)-steroid + NADH + H(+). It catalyses the reaction pregnenolone + NAD(+) = pregn-5-ene-3,20-dione + NADH + H(+). It carries out the reaction 3beta-hydroxyandrost-5-en-17-one + NAD(+) = androst-5-ene-3,17-dione + NADH + H(+). The catalysed reaction is androst-5-en-3beta,17beta-diol + NAD(+) = 17beta-hydroxy-androst-5-en-3-one + NADH + H(+). The enzyme catalyses a 3beta-hydroxysteroid + NADP(+) = a 3-oxosteroid + NADPH + H(+). It catalyses the reaction 5alpha-androstane-3beta,17beta-diol + NADP(+) = 17beta-hydroxy-5alpha-androstan-3-one + NADPH + H(+). It carries out the reaction 3beta-hydroxy-5alpha-androstan-17-one + NADP(+) = 5alpha-androstan-3,17-dione + NADPH + H(+). The catalysed reaction is a 3-oxo-Delta(5)-steroid = a 3-oxo-Delta(4)-steroid. The enzyme catalyses pregn-5-ene-3,20-dione = progesterone. It catalyses the reaction androst-5-ene-3,17-dione = androst-4-ene-3,17-dione. It carries out the reaction 17beta-hydroxy-androst-5-en-3-one = testosterone. The catalysed reaction is 5alpha-androstane-3beta,17beta-diol + NAD(+) = 17beta-hydroxy-5alpha-androstan-3-one + NADH + H(+). The protein operates within steroid hormone biosynthesis. It functions in the pathway steroid metabolism. Its function is as follows. A bifunctional enzyme responsible for the oxidation and isomerization of 3beta-hydroxy-Delta(5)-steroid precursors to 3-oxo-Delta(4)-steroids, an essential step in steroid hormone biosynthesis. Specifically catalyzes the conversion of pregnenolone to progesterone, 17alpha-hydroxypregnenolone to 17alpha-hydroxyprogesterone, dehydroepiandrosterone (DHEA) to 4-androstenedione, and androstenediol to testosterone. Additionally, catalyzes the interconversion between 3beta-hydroxy and 3-oxo-5alpha-androstane steroids controlling the bioavalability of the active forms. Specifically converts dihydrotestosterone to its inactive form 5alpha-androstanediol, that does not bind androgen receptor/AR. Also converts androstanedione, a precursor of testosterone and estrone, to epiandrosterone. Expected to use NAD(+) as preferred electron donor for the 3beta-hydroxy-steroid dehydrogenase activity and NADPH for the 3-ketosteroid reductase activity. This Homo sapiens (Human) protein is 3 beta-hydroxysteroid dehydrogenase/Delta 5--&gt;4-isomerase type 1.